The chain runs to 267 residues: MEKIKVCVADDNRELVSLLSEYIEGQEDMEVIGVAYNGQECLSLFKEKDPDVLVLDIIMPHLDGLAVLERLRESDLKKQPNVIMLTAFGQEDVTKKAVDLGASYFILKPFDMENLVGHIRQVSGNASSVTHRAPSSQSSIIRSSQPEPKKKNLDASITSIIHEIGVPAHIKGYLYLREAISMVYNDIELLGSITKVLYPDIAKKFNTTASRVERAIRHAIEVAWSRGNIDSISSLFGYTVSMTKAKPTNSEFIAMVADKLRLEHKAS.

One can recognise a Response regulatory domain in the interval 5–123 (KVCVADDNRE…NLVGHIRQVS (119 aa)). The Ca(2+) site is built by Asp10, Asp11, and Asp56. Asp56 is modified (4-aspartylphosphate). The tract at residues 126–150 (ASSVTHRAPSSQSSIIRSSQPEPKK) is disordered. The span at 135 to 145 (SSQSSIIRSSQ) shows a compositional bias: low complexity. Positions 199–218 (PDIAKKFNTTASRVERAIRH) form a DNA-binding region, H-T-H motif.

Interacts with small protein YqaH, which is encoded in the skin prophage-like element. Ca(2+) is required as a cofactor. Phosphorylated by KinA and KinB.

It is found in the cytoplasm. Functionally, may play the central regulatory role in sporulation. It may be an element of the effector pathway responsible for the activation of sporulation genes in response to nutritional stress. Spo0A may act in concert with Spo0H (a sigma factor) to control the expression of some genes that are critical to the sporulation process. Repressor of abrB, activator of the spoIIa operon. Binds the DNA sequence 5'-TGNCGAA-3' (0A box). The sequence is that of Stage 0 sporulation protein A (spo0A) from Bacillus subtilis (strain 168).